The following is a 421-amino-acid chain: 4-hydroxy-3-methylbut-2-en-1-yl diphosphate synthase (flavodoxin) (421 aa).

Cys-298, Cys-301, Cys-344, and Glu-351 together coordinate [4Fe-4S] cluster.

Belongs to the IspG family. [4Fe-4S] cluster is required as a cofactor.

It carries out the reaction (2E)-4-hydroxy-3-methylbut-2-enyl diphosphate + oxidized [flavodoxin] + H2O + 2 H(+) = 2-C-methyl-D-erythritol 2,4-cyclic diphosphate + reduced [flavodoxin]. It functions in the pathway isoprenoid biosynthesis; isopentenyl diphosphate biosynthesis via DXP pathway; isopentenyl diphosphate from 1-deoxy-D-xylulose 5-phosphate: step 5/6. Converts 2C-methyl-D-erythritol 2,4-cyclodiphosphate (ME-2,4cPP) into 1-hydroxy-2-methyl-2-(E)-butenyl 4-diphosphate. This Neisseria meningitidis serogroup C / serotype 2a (strain ATCC 700532 / DSM 15464 / FAM18) protein is 4-hydroxy-3-methylbut-2-en-1-yl diphosphate synthase (flavodoxin).